The chain runs to 349 residues: Small ribosomal subunit protein uS2 (349 aa).

Belongs to the universal ribosomal protein uS2 family.

The chain is Small ribosomal subunit protein uS2 from Methylobacterium sp. (strain 4-46).